The following is a 109-amino-acid chain: Nucleoid-associated protein PC1_1077 (109 aa).

It belongs to the YbaB/EbfC family. Homodimer.

It localises to the cytoplasm. The protein resides in the nucleoid. In terms of biological role, binds to DNA and alters its conformation. May be involved in regulation of gene expression, nucleoid organization and DNA protection. The polypeptide is Nucleoid-associated protein PC1_1077 (Pectobacterium carotovorum subsp. carotovorum (strain PC1)).